A 456-amino-acid chain; its full sequence is Solute carrier family 49 member 4 homolog (456 aa).

Residues M1–R29 lie on the Cytoplasmic side of the membrane. The Di-leucine motif; mediates lysosomal localization signature appears at L14–L15. The chain crosses the membrane as a helical span at residues W30–W50. Topologically, residues G51–D67 are lumenal. A helical transmembrane segment spans residues I68–L88. Residues M89–R95 lie on the Cytoplasmic side of the membrane. A helical transmembrane segment spans residues I96–V116. Topologically, residues E117–R123 are lumenal. The chain crosses the membrane as a helical span at residues I124–A144. Over P145 to A162 the chain is Cytoplasmic. The helical transmembrane segment at I163–V183 threads the bilayer. Topologically, residues P184–E207 are lumenal. The N-linked (GlcNAc...) asparagine glycan is linked to N187. Residues A208–F228 traverse the membrane as a helical segment. Over P229–R259 the chain is Cytoplasmic. A helical membrane pass occupies residues F260–V280. Residues L281–Q292 are Lumenal-facing. Residues V293–V313 form a helical membrane-spanning segment. At G314–P326 the chain is on the cytoplasmic side. The chain crosses the membrane as a helical span at residues I327–L347. At S348–T362 the chain is on the lumenal side. N349 carries an N-linked (GlcNAc...) asparagine glycan. Residues S363–V383 traverse the membrane as a helical segment. Residues E384 to G392 lie on the Cytoplasmic side of the membrane. A helical transmembrane segment spans residues I393–L413. Over T414–L420 the chain is Lumenal. The helical transmembrane segment at S421 to F441 threads the bilayer. Residues R442–V456 are Cytoplasmic-facing.

The protein belongs to the major facilitator superfamily.

Its subcellular location is the lysosome membrane. The catalysed reaction is pyridoxine(out) + n H(+)(out) = pyridoxine(in) + n H(+)(in). Its function is as follows. Mediates H(+)-dependent pyridoxine transport. The chain is Solute carrier family 49 member 4 homolog (slc49a4) from Xenopus laevis (African clawed frog).